We begin with the raw amino-acid sequence, 229 residues long: 2,3-bisphosphoglycerate-dependent phosphoglycerate mutase (229 aa).

Residues 8–15 (RHGKSEWN), 21–22 (TG), arginine 60, 87–90 (ERHY), lysine 98, 114–115 (RR), and 183–184 (GN) contribute to the substrate site. The active-site Tele-phosphohistidine intermediate is histidine 9. Glutamate 87 functions as the Proton donor/acceptor in the catalytic mechanism.

It belongs to the phosphoglycerate mutase family. BPG-dependent PGAM subfamily. Homodimer.

It carries out the reaction (2R)-2-phosphoglycerate = (2R)-3-phosphoglycerate. It participates in carbohydrate degradation; glycolysis; pyruvate from D-glyceraldehyde 3-phosphate: step 3/5. Functionally, catalyzes the interconversion of 2-phosphoglycerate and 3-phosphoglycerate. In Nautilia profundicola (strain ATCC BAA-1463 / DSM 18972 / AmH), this protein is 2,3-bisphosphoglycerate-dependent phosphoglycerate mutase.